Reading from the N-terminus, the 377-residue chain is Homoserine O-succinyltransferase (377 aa).

The 309-residue stretch at 50–358 (NAILVCHALS…PSTYGHDSFL (309 aa)) folds into the AB hydrolase-1 domain. The active-site Nucleophile is the Ser-156. Substrate is bound at residue Arg-226. Catalysis depends on residues Asp-321 and His-354. Position 355 (Asp-355) interacts with substrate.

Belongs to the AB hydrolase superfamily. MetX family. Homodimer.

The protein resides in the cytoplasm. It catalyses the reaction L-homoserine + succinyl-CoA = O-succinyl-L-homoserine + CoA. It functions in the pathway amino-acid biosynthesis; L-methionine biosynthesis via de novo pathway; O-succinyl-L-homoserine from L-homoserine: step 1/1. Its function is as follows. Transfers a succinyl group from succinyl-CoA to L-homoserine, forming succinyl-L-homoserine. This chain is Homoserine O-succinyltransferase, found in Nitrosomonas eutropha (strain DSM 101675 / C91 / Nm57).